The chain runs to 296 residues: ATP synthase gamma chain (296 aa).

A disordered region spans residues 194 to 216 (IPASAGQAANDNAGSDQPAGDYE).

The protein belongs to the ATPase gamma chain family. In terms of assembly, F-type ATPases have 2 components, CF(1) - the catalytic core - and CF(0) - the membrane proton channel. CF(1) has five subunits: alpha(3), beta(3), gamma(1), delta(1), epsilon(1). CF(0) has three main subunits: a, b and c.

It localises to the cell inner membrane. Its function is as follows. Produces ATP from ADP in the presence of a proton gradient across the membrane. The gamma chain is believed to be important in regulating ATPase activity and the flow of protons through the CF(0) complex. The sequence is that of ATP synthase gamma chain from Acidiphilium cryptum (strain JF-5).